Consider the following 301-residue polypeptide: Ribonuclease Z (301 aa).

Residues H60, H62, D64, H65, H137, D207, and H265 each contribute to the Zn(2+) site. D64 acts as the Proton acceptor in catalysis.

This sequence belongs to the RNase Z family. As to quaternary structure, homodimer. Requires Zn(2+) as cofactor.

The catalysed reaction is Endonucleolytic cleavage of RNA, removing extra 3' nucleotides from tRNA precursor, generating 3' termini of tRNAs. A 3'-hydroxy group is left at the tRNA terminus and a 5'-phosphoryl group is left at the trailer molecule.. Its function is as follows. Zinc phosphodiesterase, which displays some tRNA 3'-processing endonuclease activity. Probably involved in tRNA maturation, by removing a 3'-trailer from precursor tRNA. In Exiguobacterium sp. (strain ATCC BAA-1283 / AT1b), this protein is Ribonuclease Z.